A 470-amino-acid polypeptide reads, in one-letter code: Nuclear receptor ROR-beta (470 aa).

The nuclear receptor DNA-binding region spans 18–93 (VIPCKICGDK…LGMSRDAVKF (76 aa)). 2 consecutive NR C4-type zinc fingers follow at residues 21-41 (CKIC…CEGC) and 57-81 (CPRQ…LQKC). Residues 104–117 (LYAEVQKHQQRLQE) are compositionally biased toward basic and acidic residues. The interval 104–127 (LYAEVQKHQQRLQEQRQQQSGEAE) is disordered. One can recognise an NR LBD domain in the interval 222 to 460 (EIDRIAQNII…TLFPPLYKEL (239 aa)). Positions 456–461 (LYKELF) match the AF-2 motif.

This sequence belongs to the nuclear hormone receptor family. NR1 subfamily. Monomer. Interacts with CRX.

It is found in the nucleus. It localises to the nucleoplasm. Functionally, nuclear receptor that binds DNA as a monomer to ROR response elements (RORE) containing a single core motif half-site 5'-AGGTCA-3' preceded by a short A-T-rich sequence. Considered to have intrinsic transcriptional activity, have some natural ligands such as all-trans retinoic acid (ATRA) and other retinoids which act as inverse agonists repressing the transcriptional activity. Required for normal postnatal development of rod and cone photoreceptor cells. Modulates rod photoreceptors differentiation at least by inducing the transcription factor NRL-mediated pathway. In cone photoreceptor cells, regulates transcription of OPN1SW. Involved in the regulation of the period length and stability of the circadian rhythm. May control cytoarchitectural patterning of neocortical neurons during development. May act in a dose-dependent manner to regulate barrel formation upon innervation of layer IV neurons by thalamocortical axons. May play a role in the suppression of osteoblastic differentiation through the inhibition of RUNX2 transcriptional activity. Isoform 1 is critical for hindlimb motor control and for the differentiation of amacrine and horizontal cells in the retina. Regulates the expression of PTF1A synergistically with FOXN4. In Homo sapiens (Human), this protein is Nuclear receptor ROR-beta (RORB).